Here is a 129-residue protein sequence, read N- to C-terminus: Glycine cleavage system H protein (129 aa).

Residues 24 to 106 (TYTVGITEHA…YAGGWIFKIK (83 aa)) form the Lipoyl-binding domain. K65 carries the N6-lipoyllysine modification.

It belongs to the GcvH family. In terms of assembly, the glycine cleavage system is composed of four proteins: P, T, L and H. The cofactor is (R)-lipoate.

Its function is as follows. The glycine cleavage system catalyzes the degradation of glycine. The H protein shuttles the methylamine group of glycine from the P protein to the T protein. The polypeptide is Glycine cleavage system H protein (Escherichia coli O139:H28 (strain E24377A / ETEC)).